The sequence spans 426 residues: Glutamate-1-semialdehyde 2,1-aminomutase (426 aa).

Position 263 is an N6-(pyridoxal phosphate)lysine (lysine 263).

Belongs to the class-III pyridoxal-phosphate-dependent aminotransferase family. HemL subfamily. In terms of assembly, homodimer. Pyridoxal 5'-phosphate is required as a cofactor.

It is found in the cytoplasm. The enzyme catalyses (S)-4-amino-5-oxopentanoate = 5-aminolevulinate. It functions in the pathway porphyrin-containing compound metabolism; protoporphyrin-IX biosynthesis; 5-aminolevulinate from L-glutamyl-tRNA(Glu): step 2/2. The chain is Glutamate-1-semialdehyde 2,1-aminomutase from Caldicellulosiruptor bescii (strain ATCC BAA-1888 / DSM 6725 / KCTC 15123 / Z-1320) (Anaerocellum thermophilum).